A 214-amino-acid chain; its full sequence is Adenylate kinase (214 aa).

An ATP-binding site is contributed by 10–15 (GVGKGT). The interval 30–59 (STGDILRAAVKELTPMGAKAKGYMDSGALV) is NMP. AMP-binding positions include threonine 31, arginine 36, 57–59 (ALV), 85–88 (GFPR), and glutamine 92. The LID stretch occupies residues 126–163 (GRRACANCGAGYHVDFAPSKVAGVCDACSGQLVQREDD). Arginine 127 is an ATP binding site. Residues cysteine 130, cysteine 133, cysteine 150, and cysteine 153 each contribute to the Zn(2+) site. Residues arginine 160 and arginine 171 each coordinate AMP. Residue glycine 199 participates in ATP binding.

Belongs to the adenylate kinase family. In terms of assembly, monomer.

The protein localises to the cytoplasm. The enzyme catalyses AMP + ATP = 2 ADP. It participates in purine metabolism; AMP biosynthesis via salvage pathway; AMP from ADP: step 1/1. Functionally, catalyzes the reversible transfer of the terminal phosphate group between ATP and AMP. Plays an important role in cellular energy homeostasis and in adenine nucleotide metabolism. The chain is Adenylate kinase from Geobacter sp. (strain M21).